A 114-amino-acid polypeptide reads, in one-letter code: Large ribosomal subunit protein uL22 (114 aa).

The protein belongs to the universal ribosomal protein uL22 family. As to quaternary structure, part of the 50S ribosomal subunit.

Its function is as follows. This protein binds specifically to 23S rRNA; its binding is stimulated by other ribosomal proteins, e.g. L4, L17, and L20. It is important during the early stages of 50S assembly. It makes multiple contacts with different domains of the 23S rRNA in the assembled 50S subunit and ribosome. In terms of biological role, the globular domain of the protein is located near the polypeptide exit tunnel on the outside of the subunit, while an extended beta-hairpin is found that lines the wall of the exit tunnel in the center of the 70S ribosome. The protein is Large ribosomal subunit protein uL22 of Myxococcus xanthus (strain DK1622).